Consider the following 333-residue polypeptide: Adenosine deaminase (333 aa).

His12 and His14 together coordinate Zn(2+). Substrate contacts are provided by His14, Asp16, and Gly170. His197 serves as a coordination point for Zn(2+). Catalysis depends on Glu200, which acts as the Proton donor. Asp278 is a Zn(2+) binding site. Asp279 lines the substrate pocket.

This sequence belongs to the metallo-dependent hydrolases superfamily. Adenosine and AMP deaminases family. Adenosine deaminase subfamily. Zn(2+) serves as cofactor.

The enzyme catalyses adenosine + H2O + H(+) = inosine + NH4(+). The catalysed reaction is 2'-deoxyadenosine + H2O + H(+) = 2'-deoxyinosine + NH4(+). In terms of biological role, catalyzes the hydrolytic deamination of adenosine and 2-deoxyadenosine. In Proteus mirabilis (strain HI4320), this protein is Adenosine deaminase.